We begin with the raw amino-acid sequence, 457 residues long: UDP-N-acetylmuramoyl-tripeptide--D-alanyl-D-alanine ligase (457 aa).

113 to 119 (GSNGKTT) serves as a coordination point for ATP.

This sequence belongs to the MurCDEF family. MurF subfamily.

It localises to the cytoplasm. The enzyme catalyses D-alanyl-D-alanine + UDP-N-acetyl-alpha-D-muramoyl-L-alanyl-gamma-D-glutamyl-meso-2,6-diaminopimelate + ATP = UDP-N-acetyl-alpha-D-muramoyl-L-alanyl-gamma-D-glutamyl-meso-2,6-diaminopimeloyl-D-alanyl-D-alanine + ADP + phosphate + H(+). The protein operates within cell wall biogenesis; peptidoglycan biosynthesis. Its function is as follows. Involved in cell wall formation. Catalyzes the final step in the synthesis of UDP-N-acetylmuramoyl-pentapeptide, the precursor of murein. The sequence is that of UDP-N-acetylmuramoyl-tripeptide--D-alanyl-D-alanine ligase from Bacillus subtilis (strain 168).